Here is a 151-residue protein sequence, read N- to C-terminus: Ribosomal RNA large subunit methyltransferase H (151 aa).

S-adenosyl-L-methionine contacts are provided by residues Leu-73, Gly-100, and 119–124 (LTKLTL).

Belongs to the RNA methyltransferase RlmH family. In terms of assembly, homodimer.

It is found in the cytoplasm. It catalyses the reaction pseudouridine(1915) in 23S rRNA + S-adenosyl-L-methionine = N(3)-methylpseudouridine(1915) in 23S rRNA + S-adenosyl-L-homocysteine + H(+). Its function is as follows. Specifically methylates the pseudouridine at position 1915 (m3Psi1915) in 23S rRNA. This is Ribosomal RNA large subunit methyltransferase H from Campylobacter hominis (strain ATCC BAA-381 / DSM 21671 / CCUG 45161 / LMG 19568 / NCTC 13146 / CH001A).